Here is a 243-residue protein sequence, read N- to C-terminus: Coenzyme F420 hydrogenase subunit gamma (243 aa).

4Fe-4S ferredoxin-type domains are found at residues 182-210 (IKEV…DMVE) and 211-241 (AKPN…IIRK). The [4Fe-4S] cluster site is built by Cys191, Cys194, Cys197, Cys201, Cys220, Cys223, Cys226, and Cys230.

Belongs to the FrhG family. As to quaternary structure, complex of alpha, beta and gamma subunits. Requires Ni(2+) as cofactor. The cofactor is iron-sulfur cluster. FAD serves as cofactor.

The enzyme catalyses oxidized coenzyme F420-(gamma-L-Glu)(n) + H2 + H(+) = reduced coenzyme F420-(gamma-L-Glu)(n). In terms of biological role, reduces the physiological low-potential two-electron acceptor coenzyme F420, and the artificial one-electron acceptor methylviologen. The protein is Coenzyme F420 hydrogenase subunit gamma (frhG) of Methanococcus voltae.